Here is a 502-residue protein sequence, read N- to C-terminus: Protein O-glucosyltransferase 2 (502 aa).

The signal sequence occupies residues Met-1–Ala-19. Residues Glu-24–Gly-130 form a Filamin repeat. 2 N-linked (GlcNAc...) asparagine glycosylation sites follow: Asn-302 and Asn-414. The Prevents secretion from ER signature appears at Lys-499–Leu-502.

Belongs to the KDELC family. Post-translationally, N-glycosylated.

It localises to the endoplasmic reticulum lumen. The enzyme catalyses L-seryl-[EGF-like domain protein] + UDP-alpha-D-glucose = 3-O-(beta-D-glucosyl)-L-seryl-[EGF-like domain protein] + UDP + H(+). The catalysed reaction is L-seryl-[EGF-like domain protein] + UDP-alpha-D-xylose = 3-O-(beta-D-xylosyl)-L-seryl-[EGF-like domain protein] + UDP + H(+). Its pathway is protein modification; protein glycosylation. Functionally, protein glucosyltransferase that catalyzes the transfer of glucose from UDP-glucose to a serine residue within the consensus sequence peptide C-X-N-T-X-G-S-F-X-C. Can also catalyze the transfer of xylose from UDP-xylose but less efficiently. Specifically targets extracellular EGF repeats of proteins such as NOTCH1, NOTCH3, FBN1, FBN2 and LTBP1. May regulate the transport of NOTCH1 and NOTCH3 to the plasma membrane and thereby the Notch signaling pathway. The protein is Protein O-glucosyltransferase 2 of Homo sapiens (Human).